Consider the following 183-residue polypeptide: uncharacterized protein (183 aa).

The protein belongs to the chlamydial CPn_0803/CT_584/TC_0873 family.

This is an uncharacterized protein from Chlamydia muridarum (strain MoPn / Nigg).